The primary structure comprises 426 residues: UDP-N-acetylglucosamine 1-carboxyvinyltransferase 2 (426 aa).

A phosphoenolpyruvate-binding site is contributed by 22-23 (KN). UDP-N-acetyl-alpha-D-glucosamine is bound at residue Arg92. Asp116 acts as the Proton donor in catalysis. Residues 121 to 125 (RPIDQ), Asp307, and Ile329 contribute to the UDP-N-acetyl-alpha-D-glucosamine site.

Belongs to the EPSP synthase family. MurA subfamily.

The protein resides in the cytoplasm. It carries out the reaction phosphoenolpyruvate + UDP-N-acetyl-alpha-D-glucosamine = UDP-N-acetyl-3-O-(1-carboxyvinyl)-alpha-D-glucosamine + phosphate. The protein operates within cell wall biogenesis; peptidoglycan biosynthesis. Its function is as follows. Cell wall formation. Adds enolpyruvyl to UDP-N-acetylglucosamine. The protein is UDP-N-acetylglucosamine 1-carboxyvinyltransferase 2 of Lactiplantibacillus plantarum (strain ATCC BAA-793 / NCIMB 8826 / WCFS1) (Lactobacillus plantarum).